A 134-amino-acid chain; its full sequence is MKKTPLLNIALSRVIASLGHGDILMIVDAGMPVPAGVELIDLALTRGVPDFISVLDVVLSEMQVESHVLANEMAEVKPPALQVIESLNLEDQLGQQRWISHEDLKVLSRKAKAIIRTGECQPYSNVALVSGVVF.

The active-site Proton donor is His20. Substrate is bound by residues Asp28, His101, and 123–125 (YSN).

It belongs to the RbsD / FucU family. RbsD subfamily. Homodecamer.

It is found in the cytoplasm. It catalyses the reaction beta-D-ribopyranose = beta-D-ribofuranose. It functions in the pathway carbohydrate metabolism; D-ribose degradation; D-ribose 5-phosphate from beta-D-ribopyranose: step 1/2. In terms of biological role, catalyzes the interconversion of beta-pyran and beta-furan forms of D-ribose. The polypeptide is D-ribose pyranase (Pseudomonas syringae pv. syringae (strain B728a)).